Consider the following 254-residue polypeptide: TLC domain-containing protein At5g14285 (254 aa).

The next 6 helical transmembrane spans lie at 12 to 32, 45 to 65, 82 to 101, 124 to 144, 172 to 192, and 211 to 231; these read DLPIFFSMFLTIYLIAYFIVF, SCLISIFHGSPAVFLATRAVF, TVLDFSVAYFLTDLFHYIVF, FLVFHGACAILGLLILAEVTS, LSPPFYAFYSIVRGVLGPLFF, and WLWISWAIVVGIAITVSILWI. In terms of domain architecture, TLC spans 38–248; it reads QIRPEASSCL…FSERKANKIR (211 aa).

The protein resides in the membrane. The polypeptide is TLC domain-containing protein At5g14285 (Arabidopsis thaliana (Mouse-ear cress)).